Here is a 530-residue protein sequence, read N- to C-terminus: CTP synthase (530 aa).

The interval Met-1–Met-267 is amidoligase domain. Ser-13 is a CTP binding site. Ser-13 lines the UTP pocket. Ser-14–Ile-19 is a binding site for ATP. Tyr-54 serves as a coordination point for L-glutamine. ATP is bound at residue Asp-71. Residues Asp-71 and Glu-141 each coordinate Mg(2+). Residues Asp-148–Glu-150, Lys-188–Gln-193, and Lys-224 each bind CTP. Residues Lys-188–Gln-193 and Lys-224 each bind UTP. Arg-240–Ala-242 is an ATP binding site. Positions Lys-292–Met-530 constitute a Glutamine amidotransferase type-1 domain. Residue Gly-354 participates in L-glutamine binding. Cys-381 (nucleophile; for glutamine hydrolysis) is an active-site residue. L-glutamine contacts are provided by residues Leu-382 to Gln-385, Glu-405, and Arg-463. Catalysis depends on residues His-508 and Glu-510.

It belongs to the CTP synthase family. As to quaternary structure, homotetramer.

It carries out the reaction UTP + L-glutamine + ATP + H2O = CTP + L-glutamate + ADP + phosphate + 2 H(+). The enzyme catalyses L-glutamine + H2O = L-glutamate + NH4(+). It catalyses the reaction UTP + NH4(+) + ATP = CTP + ADP + phosphate + 2 H(+). It functions in the pathway pyrimidine metabolism; CTP biosynthesis via de novo pathway; CTP from UDP: step 2/2. With respect to regulation, allosterically activated by GTP, when glutamine is the substrate; GTP has no effect on the reaction when ammonia is the substrate. The allosteric effector GTP functions by stabilizing the protein conformation that binds the tetrahedral intermediate(s) formed during glutamine hydrolysis. Inhibited by the product CTP, via allosteric rather than competitive inhibition. Functionally, catalyzes the ATP-dependent amination of UTP to CTP with either L-glutamine or ammonia as the source of nitrogen. Regulates intracellular CTP levels through interactions with the four ribonucleotide triphosphates. In Latilactobacillus sakei subsp. sakei (strain 23K) (Lactobacillus sakei subsp. sakei), this protein is CTP synthase.